A 590-amino-acid chain; its full sequence is Arginine--tRNA ligase (590 aa).

Positions 126-136 (PNVAKEMHVGH) match the 'HIGH' region motif.

The protein belongs to the class-I aminoacyl-tRNA synthetase family. In terms of assembly, monomer.

It is found in the cytoplasm. It carries out the reaction tRNA(Arg) + L-arginine + ATP = L-arginyl-tRNA(Arg) + AMP + diphosphate. This is Arginine--tRNA ligase from Streptomyces avermitilis (strain ATCC 31267 / DSM 46492 / JCM 5070 / NBRC 14893 / NCIMB 12804 / NRRL 8165 / MA-4680).